We begin with the raw amino-acid sequence, 353 residues long: Chloroplastic lipocalin (353 aa).

Residues 1–18 show a composition bias toward low complexity; the sequence is MILLSSSISLSRPVSSQS. A disordered region spans residues 1-27; it reads MILLSSSISLSRPVSSQSFSPPAATST. The transit peptide at 1–39 directs the protein to the chloroplast; sequence MILLSSSISLSRPVSSQSFSPPAATSTRRSHSSVTVKCC. Cysteines 163 and 299 form a disulfide.

Belongs to the calycin superfamily. Lipocalin family. Expressed in leaves at low levels (at protein levels). Present in seeds.

The protein resides in the plastid. The protein localises to the chloroplast thylakoid lumen. Lipocalin that prevents thylakoidal membrane lipids peroxidation and confers protection against oxidative stress, especially mediated by singlet oxygen in response to high light and other stress (e.g. heat shocks). Required for seed longevity by ensuring polyunsaturated lipids integrity. This chain is Chloroplastic lipocalin, found in Arabidopsis thaliana (Mouse-ear cress).